A 375-amino-acid chain; its full sequence is Xylose transport system permease protein XylH (375 aa).

10 helical membrane-spanning segments follow: residues 9 to 29 (LQVYIMLIAIAVIMAFFSVAT), 52 to 72 (LAIGMVFVIISAEIDLSVGSL), 85 to 105 (VWWGFPLPVTIIATIALGLIF), 118 to 138 (VPSFIVTLAGYLAFRGILIGL), 159 to 179 (LSDIAGVILGGIAVIGFVLWG), 199 to 219 (DFTKYALFAVIVLGAIYLLND), 220 to 240 (YRGIPFPVLVLAVLAILGLFL), 271 to 291 (KLIIFAMNGVLVAIAGLILSA), 319 to 339 (LAGGVGSVFGVVIGALIIASL), and 348 to 368 (VPTFWQYIVKGGILLLAVWID).

It belongs to the binding-protein-dependent transport system permease family. AraH/RbsC subfamily.

It localises to the cell inner membrane. Functionally, part of the binding-protein-dependent transport system for D-xylose. Probably responsible for the translocation of the substrate across the membrane. The protein is Xylose transport system permease protein XylH (xylH) of Haemophilus influenzae (strain ATCC 51907 / DSM 11121 / KW20 / Rd).